We begin with the raw amino-acid sequence, 540 residues long: Pentatricopeptide repeat-containing protein At1g14470 (540 aa).

PPR repeat units follow at residues Asn70–Pro104, Asp105–Lys134, Asp135–Arg165, Lys166–Asn196, Asp197–Lys227, Ser228–Pro262, Asn263–Leu297, Asn298–Gln328, Asn330–Ser364, Trp365–Lys395, Asp397–Leu431, Asn432–Arg462, Asp463–Pro497, and Asp498–Pro528.

This sequence belongs to the PPR family. PCMP-A subfamily.

This is Pentatricopeptide repeat-containing protein At1g14470 (PCMP-A4) from Arabidopsis thaliana (Mouse-ear cress).